A 170-amino-acid polypeptide reads, in one-letter code: Acireductone dioxygenase (170 aa).

Residues histidine 99, histidine 101, glutamate 105, and histidine 144 each coordinate Fe(2+). Residues histidine 99, histidine 101, glutamate 105, and histidine 144 each contribute to the Ni(2+) site.

Belongs to the acireductone dioxygenase (ARD) family. In terms of assembly, monomer. Fe(2+) serves as cofactor. Ni(2+) is required as a cofactor.

It carries out the reaction 1,2-dihydroxy-5-(methylsulfanyl)pent-1-en-3-one + O2 = 3-(methylsulfanyl)propanoate + CO + formate + 2 H(+). The catalysed reaction is 1,2-dihydroxy-5-(methylsulfanyl)pent-1-en-3-one + O2 = 4-methylsulfanyl-2-oxobutanoate + formate + 2 H(+). It participates in amino-acid biosynthesis; L-methionine biosynthesis via salvage pathway; L-methionine from S-methyl-5-thio-alpha-D-ribose 1-phosphate: step 5/6. Functionally, catalyzes 2 different reactions between oxygen and the acireductone 1,2-dihydroxy-3-keto-5-methylthiopentene (DHK-MTPene) depending upon the metal bound in the active site. Fe-containing acireductone dioxygenase (Fe-ARD) produces formate and 2-keto-4-methylthiobutyrate (KMTB), the alpha-ketoacid precursor of methionine in the methionine recycle pathway. Ni-containing acireductone dioxygenase (Ni-ARD) produces methylthiopropionate, carbon monoxide and formate, and does not lie on the methionine recycle pathway. The sequence is that of Acireductone dioxygenase from Bacillus anthracis.